The primary structure comprises 76 residues: Omega-conotoxin-like TeA61 (76 aa).

Positions 1 to 22 (MKLTCMMIVAVLFLTAWTFATA) are cleaved as a signal peptide. Residues 23–51 (DDSSNGLGNLFLKAHHEMKNPEASKLNER) constitute a propeptide that is removed on maturation. 3 cysteine pairs are disulfide-bonded: cysteine 52/cysteine 67, cysteine 59/cysteine 70, and cysteine 66/cysteine 75.

It belongs to the conotoxin O1 superfamily. As to expression, expressed by the venom duct.

The protein localises to the secreted. Functionally, omega-conotoxins act at presynaptic membranes, they bind and block voltage-gated calcium channels (Cav). In Conus textile (Cloth-of-gold cone), this protein is Omega-conotoxin-like TeA61.